A 367-amino-acid polypeptide reads, in one-letter code: Probable butyrate kinase (367 aa).

It belongs to the acetokinase family.

The protein localises to the cytoplasm. It carries out the reaction butanoate + ATP = butanoyl phosphate + ADP. The protein is Probable butyrate kinase of Bacillus cereus (strain ZK / E33L).